Consider the following 1373-residue polypeptide: DNA-directed RNA polymerase subunit beta (1373 aa).

Belongs to the RNA polymerase beta chain family. In terms of assembly, the RNAP catalytic core consists of 2 alpha, 1 beta, 1 beta' and 1 omega subunit. When a sigma factor is associated with the core the holoenzyme is formed, which can initiate transcription.

It carries out the reaction RNA(n) + a ribonucleoside 5'-triphosphate = RNA(n+1) + diphosphate. Functionally, DNA-dependent RNA polymerase catalyzes the transcription of DNA into RNA using the four ribonucleoside triphosphates as substrates. The sequence is that of DNA-directed RNA polymerase subunit beta from Rickettsia felis (strain ATCC VR-1525 / URRWXCal2) (Rickettsia azadi).